The chain runs to 1331 residues: Alpha,alpha-trehalose-phosphate synthase [UDP-forming] 1 (1331 aa).

Over residues 1–13 (MTDTATGVHSNAN) the composition is skewed to polar residues. Disordered stretches follow at residues 1–50 (MTDT…DNDP), 71–118 (TGKE…SGQL), and 1312–1331 (PMDQ…SFGN). Basic and acidic residues predominate over residues 39 to 50 (DPFDRPKNDNDP). A compositionally biased stretch (acidic residues) spans 77-98 (LDESDDMTENEDHDEMANEDDG). The segment covering 102-112 (NEKKVETRKMD) has biased composition (basic and acidic residues). Polar residues predominate over residues 1318–1331 (SSTLGASLGTSFGN).

The protein in the N-terminal section; belongs to the glycosyltransferase 20 family. In the C-terminal section; belongs to the gob-1 trehalose phosphatase family.

The enzyme catalyses D-glucose 6-phosphate + UDP-alpha-D-glucose = alpha,alpha-trehalose 6-phosphate + UDP + H(+). Its function is as follows. Catalyzes the production of trehalose from glucose-6-phosphate and UDP-alpha-D-glucose in a 2 step process. This chain is Alpha,alpha-trehalose-phosphate synthase [UDP-forming] 1 (tps-1), found in Caenorhabditis elegans.